We begin with the raw amino-acid sequence, 152 residues long: Deoxyuridine 5'-triphosphate nucleotidohydrolase (152 aa).

Substrate-binding positions include 71 to 73, Asn84, 88 to 90, and Met98; these read RSG and LVD.

It belongs to the dUTPase family. Mg(2+) serves as cofactor.

It catalyses the reaction dUTP + H2O = dUMP + diphosphate + H(+). It participates in pyrimidine metabolism; dUMP biosynthesis; dUMP from dCTP (dUTP route): step 2/2. Its function is as follows. This enzyme is involved in nucleotide metabolism: it produces dUMP, the immediate precursor of thymidine nucleotides and it decreases the intracellular concentration of dUTP so that uracil cannot be incorporated into DNA. The sequence is that of Deoxyuridine 5'-triphosphate nucleotidohydrolase from Shewanella oneidensis (strain ATCC 700550 / JCM 31522 / CIP 106686 / LMG 19005 / NCIMB 14063 / MR-1).